We begin with the raw amino-acid sequence, 151 residues long: Large ribosomal subunit protein uL13 (151 aa).

This sequence belongs to the universal ribosomal protein uL13 family. Part of the 50S ribosomal subunit.

Functionally, this protein is one of the early assembly proteins of the 50S ribosomal subunit, although it is not seen to bind rRNA by itself. It is important during the early stages of 50S assembly. This Synechococcus sp. (strain JA-2-3B'a(2-13)) (Cyanobacteria bacterium Yellowstone B-Prime) protein is Large ribosomal subunit protein uL13.